We begin with the raw amino-acid sequence, 355 residues long: Chromosomal protein D1 (355 aa).

Met1 carries the N-acetylmethionine modification. The segment at 1–355 (MEEVAVKKRG…NYNDSESVAA (355 aa)) is disordered. The segment at residues 7-14 (KKRGRPSK) is a DNA-binding region (a.T hook 1). Ser30 bears the Phosphoserine mark. DNA-binding regions (a.T hook) lie at residues 34-41 (KKRGRPAK) and 60-67 (KIQNDEDP). Positions 64-77 (DEDPEDEGEEDGDG) are enriched in acidic residues. Phosphoserine is present on residues Ser80, Ser88, and Ser89. Positions 94-101 (KGRGRPKS) form a DNA-binding region, a.T hook 4. A phosphoserine mark is found at Ser107, Ser109, and Ser112. The residue at position 115 (Thr115) is a Phosphothreonine. The residue at position 118 (Ser118) is a Phosphoserine. The span at 119 to 130 (AKKRKAGRPKKH) shows a compositional bias: basic residues. Positions 122–129 (RKAGRPKK) form a DNA-binding region, a.T hook 5. Ser133 and Ser135 each carry phosphoserine; by CK2. Acidic residues predominate over residues 135 to 147 (SENEDDQDEDDDG). Phosphoserine is present on residues Ser149, Ser150, Ser161, Ser164, and Ser170. Positions 155 to 162 (RPVGRPSA) form a DNA-binding region, a.T hook 6. The segment at residues 174-181 (RGLGRPKK) is a DNA-binding region (a.T hook 7). Position 186 is a phosphoserine; by CK2 (Ser186). The segment at residues 196 to 203 (KKRGRPPQ) is a DNA-binding region (a.T hook 8). A Phosphoserine modification is found at Ser208. The segment at residues 219 to 226 (RPRGRPKA) is a DNA-binding region (a.T hook 9). The span at 237 to 247 (NDDDQDDENSG) shows a compositional bias: acidic residues. Residues Ser246, Ser252, and Ser253 each carry the phosphoserine modification. 2 consecutive DNA-binding regions (a.T hook) follow at residues 262 to 269 (KKRGRPSL) and 281 to 288 (KPRSRPAK). A phosphoserine mark is found at Ser299 and Ser307. A compositionally biased stretch (basic and acidic residues) spans 307-318 (SKKESNDEDRAV). Position 311 is a phosphoserine; by CK2 (Ser311). Position 321 is a phosphothreonine (Thr321). Ser332 bears the Phosphoserine; by CK2 mark. Polar residues predominate over residues 345 to 355 (DNYNDSESVAA).

The protein localises to the nucleus. The protein resides in the chromosome. This satellite DNA-associated protein is a double-stranded DNA binding protein specific for tracts of pure at DNA. It may play a role in organizing the higher-order structure of euchromatin as well as heterochromatin. This is Chromosomal protein D1 (D1) from Drosophila melanogaster (Fruit fly).